Consider the following 441-residue polypeptide: RUN domain-containing protein 3A (441 aa).

The interval 1–293 is interaction with RAP2A; it reads MEASFVQTTM…LQLQLEEAAA (293 aa). One can recognise an RUN domain in the interval 52 to 184; that stretch reads DDSSEEFVNF…IDFSFCLKGE (133 aa). T210 bears the Phosphothreonine mark. Residues 211-234 are disordered; that stretch reads DEEERHSAESSTSEDNSPEHPYLP. S227 carries the post-translational modification Phosphoserine. Positions 262–317 form a coiled coil; sequence YLEELVRLRESQLKDLEAENRRLQLQLEEAAAQNQREKRELEGVILELQEQLTGLI. The span at 367-379 shows a compositional bias: polar residues; it reads PLSAEASLSSDSQ. The disordered stretch occupies residues 367 to 399; sequence PLSAEASLSSDSQRLGEGKRDEEPWGPIGKDPT. A compositionally biased stretch (basic and acidic residues) spans 380–389; that stretch reads RLGEGKRDEE. Phosphoserine is present on residues S411 and S414.

It belongs to the RUNDC3 family. Interacts with the GTP-bound form of RAP2A.

In terms of biological role, may act as an effector of RAP2A in neuronal cells. The protein is RUN domain-containing protein 3A (RUNDC3A) of Bos taurus (Bovine).